The chain runs to 334 residues: Holliday junction branch migration complex subunit RuvB (334 aa).

Residues 4–186 (ADRLIAPISN…FGIVQRLEYY (183 aa)) form a large ATPase domain (RuvB-L) region. ATP is bound by residues Ile-25, Arg-26, Gly-67, Lys-70, Thr-71, Thr-72, 133–135 (EDY), Arg-176, Tyr-186, and Arg-223. Thr-71 serves as a coordination point for Mg(2+). Residues 187-257 (KVADLQHIVQ…TADRALNMLD (71 aa)) are small ATPAse domain (RuvB-S). Positions 260–334 (HQGFDYMDRK…RAYLHFGIEK (75 aa)) are head domain (RuvB-H). Positions 315 and 320 each coordinate DNA.

It belongs to the RuvB family. Homohexamer. Forms an RuvA(8)-RuvB(12)-Holliday junction (HJ) complex. HJ DNA is sandwiched between 2 RuvA tetramers; dsDNA enters through RuvA and exits via RuvB. An RuvB hexamer assembles on each DNA strand where it exits the tetramer. Each RuvB hexamer is contacted by two RuvA subunits (via domain III) on 2 adjacent RuvB subunits; this complex drives branch migration. In the full resolvosome a probable DNA-RuvA(4)-RuvB(12)-RuvC(2) complex forms which resolves the HJ.

Its subcellular location is the cytoplasm. The enzyme catalyses ATP + H2O = ADP + phosphate + H(+). Its function is as follows. The RuvA-RuvB-RuvC complex processes Holliday junction (HJ) DNA during genetic recombination and DNA repair, while the RuvA-RuvB complex plays an important role in the rescue of blocked DNA replication forks via replication fork reversal (RFR). RuvA specifically binds to HJ cruciform DNA, conferring on it an open structure. The RuvB hexamer acts as an ATP-dependent pump, pulling dsDNA into and through the RuvAB complex. RuvB forms 2 homohexamers on either side of HJ DNA bound by 1 or 2 RuvA tetramers; 4 subunits per hexamer contact DNA at a time. Coordinated motions by a converter formed by DNA-disengaged RuvB subunits stimulates ATP hydrolysis and nucleotide exchange. Immobilization of the converter enables RuvB to convert the ATP-contained energy into a lever motion, pulling 2 nucleotides of DNA out of the RuvA tetramer per ATP hydrolyzed, thus driving DNA branch migration. The RuvB motors rotate together with the DNA substrate, which together with the progressing nucleotide cycle form the mechanistic basis for DNA recombination by continuous HJ branch migration. Branch migration allows RuvC to scan DNA until it finds its consensus sequence, where it cleaves and resolves cruciform DNA. The sequence is that of Holliday junction branch migration complex subunit RuvB from Vibrio cholerae serotype O1 (strain ATCC 39541 / Classical Ogawa 395 / O395).